The following is a 212-amino-acid chain: MTGTFITVEGPDGAGKTTQLQLLADRLTAEGYEIVMTREPGGTRIGNEIRSLILNPDFQEMDEMTEILLYAASRAQHVNELIRPALAAGKIVLCDRFIDASIAYQGYGLGYTIEQVRSINQQATNHLTPDRTYLFDLTVSESKQRMMDRGALDRIEQRDDAFRQRVYDGFMTLAVQEPERIQLVDANQSIESLQTELCKDVLTYLKKRERLS.

Gly-10–Thr-17 contacts ATP.

It belongs to the thymidylate kinase family.

It carries out the reaction dTMP + ATP = dTDP + ADP. Functionally, phosphorylation of dTMP to form dTDP in both de novo and salvage pathways of dTTP synthesis. This chain is Thymidylate kinase, found in Exiguobacterium sibiricum (strain DSM 17290 / CCUG 55495 / CIP 109462 / JCM 13490 / 255-15).